Consider the following 81-residue polypeptide: Photosystem I iron-sulfur center (81 aa).

4Fe-4S ferredoxin-type domains are found at residues 1-31 and 39-68; these read MSHKVKIYDTCIGCTQCVRACPLDVLEMVPW and IASSPRTEDCVGCKRCETACPTDFLSIRVY. 8 residues coordinate [4Fe-4S] cluster: cysteine 11, cysteine 14, cysteine 17, cysteine 21, cysteine 48, cysteine 51, cysteine 54, and cysteine 58.

In terms of assembly, the cyanobacterial PSI reaction center is composed of one copy each of PsaA,B,C,D,E,F,I,J,K,L,M and X, and forms trimeric complexes. The cofactor is [4Fe-4S] cluster.

The protein resides in the cellular thylakoid membrane. The catalysed reaction is reduced [plastocyanin] + hnu + oxidized [2Fe-2S]-[ferredoxin] = oxidized [plastocyanin] + reduced [2Fe-2S]-[ferredoxin]. In terms of biological role, apoprotein for the two 4Fe-4S centers FA and FB of photosystem I (PSI); essential for photochemical activity. FB is the terminal electron acceptor of PSI, donating electrons to ferredoxin. The C-terminus interacts with PsaA/B/D and helps assemble the protein into the PSI complex. Required for binding of PsaD and PsaE to PSI. PSI is a plastocyanin/cytochrome c6-ferredoxin oxidoreductase, converting photonic excitation into a charge separation, which transfers an electron from the donor P700 chlorophyll pair to the spectroscopically characterized acceptors A0, A1, FX, FA and FB in turn. The chain is Photosystem I iron-sulfur center from Rippkaea orientalis (strain PCC 8801 / RF-1) (Cyanothece sp. (strain PCC 8801)).